Reading from the N-terminus, the 216-residue chain is Guanylate kinase (216 aa).

Residues 11 to 189 (GVLIVISGPS…AVKKIEAILL (179 aa)) enclose the Guanylate kinase-like domain. ATP is bound at residue 18 to 25 (GPSGAGKG).

It belongs to the guanylate kinase family.

The protein resides in the cytoplasm. It carries out the reaction GMP + ATP = GDP + ADP. Essential for recycling GMP and indirectly, cGMP. The polypeptide is Guanylate kinase (gmk) (Clostridium perfringens (strain 13 / Type A)).